The primary structure comprises 266 residues: MSEPHLLIDAGNSRIKWALADARRTLVDTGAFGHTRDGGADPDWSRLPRPRGAWISNVAGADVAARIDALLDARWPGLPRTTIRSRPAQCGVTNGYTTPEQLGSDRWAGLIGAHAAFPGEHLLIATFGTATTLEALRADGCFTGGLIAPGWALMMRALGTHTAQLPTLTTDIASGLLAGAQAEPFQVDTPRSLSAGCLYAQAGLIERAWRDLVAAWQAPVRLVLAGGAADDVARALTIAHTRHDTLILSGLALIAADAADPATAPD.

9-16 (DAGNSRIK) lines the ATP pocket. Substrate is bound by residues Tyr96 and 103 to 106 (GSDR). The active-site Proton acceptor is the Asp105. An ATP-binding site is contributed by Thr129. Residue Thr189 participates in substrate binding.

This sequence belongs to the type III pantothenate kinase family. As to quaternary structure, homodimer. The cofactor is NH4(+). Requires K(+) as cofactor.

It localises to the cytoplasm. The catalysed reaction is (R)-pantothenate + ATP = (R)-4'-phosphopantothenate + ADP + H(+). Its pathway is cofactor biosynthesis; coenzyme A biosynthesis; CoA from (R)-pantothenate: step 1/5. In terms of biological role, catalyzes the phosphorylation of pantothenate (Pan), the first step in CoA biosynthesis. In Burkholderia cenocepacia (strain ATCC BAA-245 / DSM 16553 / LMG 16656 / NCTC 13227 / J2315 / CF5610) (Burkholderia cepacia (strain J2315)), this protein is Type III pantothenate kinase.